The following is a 203-amino-acid chain: Holliday junction branch migration complex subunit RuvA (203 aa).

The tract at residues 1-64 (MIGRLRGIIL…EDAQLLYGFN (64 aa)) is domain I. The interval 65-142 (NKQERTLFKE…KGLHGDLFTP (78 aa)) is domain II. Residues 143 to 154 (AVDLVLTSPASP) form a flexible linker region. Residues 155–203 (TSEDAEQEAVAALVALGYKPQEASRMVSKIARPDASSETLIRDALRAAL) are domain III.

The protein belongs to the RuvA family. Homotetramer. Forms an RuvA(8)-RuvB(12)-Holliday junction (HJ) complex. HJ DNA is sandwiched between 2 RuvA tetramers; dsDNA enters through RuvA and exits via RuvB. An RuvB hexamer assembles on each DNA strand where it exits the tetramer. Each RuvB hexamer is contacted by two RuvA subunits (via domain III) on 2 adjacent RuvB subunits; this complex drives branch migration. In the full resolvosome a probable DNA-RuvA(4)-RuvB(12)-RuvC(2) complex forms which resolves the HJ.

The protein localises to the cytoplasm. The RuvA-RuvB-RuvC complex processes Holliday junction (HJ) DNA during genetic recombination and DNA repair, while the RuvA-RuvB complex plays an important role in the rescue of blocked DNA replication forks via replication fork reversal (RFR). RuvA specifically binds to HJ cruciform DNA, conferring on it an open structure. The RuvB hexamer acts as an ATP-dependent pump, pulling dsDNA into and through the RuvAB complex. HJ branch migration allows RuvC to scan DNA until it finds its consensus sequence, where it cleaves and resolves the cruciform DNA. The sequence is that of Holliday junction branch migration complex subunit RuvA from Salmonella agona (strain SL483).